Consider the following 356-residue polypeptide: 1,2-phenylacetyl-CoA epoxidase, subunit E (356 aa).

Positions 2-106 (TTFHSLTVAK…MVPQGHFGYQ (105 aa)) constitute an FAD-binding FR-type domain. The segment at 112–228 (QGRYLAIAAG…AAMMDDAETA (117 aa)) is oxidoreductase. Positions 262 to 354 (QKVTVRQDGR…DVVVDFDAKG (93 aa)) constitute a 2Fe-2S ferredoxin-type domain. [2Fe-2S] cluster contacts are provided by Cys299, Cys304, Cys307, and Cys337.

The protein in the N-terminal section; belongs to the FAD-binding oxidoreductase type 6 family. [2Fe-2S] cluster serves as cofactor. Requires FAD as cofactor.

It functions in the pathway aromatic compound metabolism; phenylacetate degradation. Functionally, component of 1,2-phenylacetyl-CoA epoxidase multicomponent enzyme system which catalyzes the reduction of phenylacetyl-CoA (PA-CoA) to form 1,2-epoxyphenylacetyl-CoA. The subunit E is a reductase with a preference for NADPH and FAD, capable of reducing cytochrome c. This Escherichia coli (strain K12) protein is 1,2-phenylacetyl-CoA epoxidase, subunit E (paaE).